The chain runs to 95 residues: Gas vesicle protein S (95 aa).

The protein belongs to the gas vesicle GvpA family.

Its subcellular location is the gas vesicle. Functionally, probably a minor component of the gas vesicle. It is not clear what function gas vesicles perform in soil bacteria. In terms of biological role, when a minimal gvp locus (gvpA2-gvpR-gvpN-gvpF-gvpG-gvpL-gvpS-gvpK-gvpJ-gvpT-gvpU, called pNL29) is expressed in E.coli gas vesicles are made. This chain is Gas vesicle protein S, found in Priestia megaterium (Bacillus megaterium).